We begin with the raw amino-acid sequence, 261 residues long: MSHQAHAYHMVDPSPWPLTGAGAALLMTSGLAMWFHKNSCILMTLGLILMLLTMYQWWRDIVREGTFLGHHTSPVQQGLRYGMILFIISEVCFFAGFFWAFYHASLAPTPELGLTWPPTGINPLNPFEVPLLNTAVLLASGVSVTWAHHSITEKNRTETTQALTLTVLLGLYFTALQIMEYYETPFTMADGVYGSTFFVATGFHGLHVIIGSLFLLTCLLRHLQYHFTSKHHFGFEAAAWYWHFVDVVWLFLYISIYWWGS.

Over M1 to P15 the chain is Mitochondrial matrix. Residues W16–W34 form a helical membrane-spanning segment. At F35–C40 the chain is on the mitochondrial intermembrane side. A helical membrane pass occupies residues I41 to T66. Residues F67–T72 lie on the Mitochondrial matrix side of the membrane. A helical transmembrane segment spans residues S73–S105. Residues L106 to E128 lie on the Mitochondrial intermembrane side of the membrane. The helical transmembrane segment at V129 to T152 threads the bilayer. The Mitochondrial matrix portion of the chain corresponds to E153–N155. The helical transmembrane segment at R156 to E183 threads the bilayer. The Mitochondrial intermembrane portion of the chain corresponds to T184–D190. The helical transmembrane segment at G191–L223 threads the bilayer. Topologically, residues Q224–H232 are mitochondrial matrix. A helical membrane pass occupies residues F233–I256. Residues Y257–S261 are Mitochondrial intermembrane-facing.

The protein belongs to the cytochrome c oxidase subunit 3 family. As to quaternary structure, component of the cytochrome c oxidase (complex IV, CIV), a multisubunit enzyme composed of 14 subunits. The complex is composed of a catalytic core of 3 subunits MT-CO1, MT-CO2 and MT-CO3, encoded in the mitochondrial DNA, and 11 supernumerary subunits COX4I, COX5A, COX5B, COX6A, COX6B, COX6C, COX7A, COX7B, COX7C, COX8 and NDUFA4, which are encoded in the nuclear genome. The complex exists as a monomer or a dimer and forms supercomplexes (SCs) in the inner mitochondrial membrane with NADH-ubiquinone oxidoreductase (complex I, CI) and ubiquinol-cytochrome c oxidoreductase (cytochrome b-c1 complex, complex III, CIII), resulting in different assemblies (supercomplex SCI(1)III(2)IV(1) and megacomplex MCI(2)III(2)IV(2)).

The protein resides in the mitochondrion inner membrane. It catalyses the reaction 4 Fe(II)-[cytochrome c] + O2 + 8 H(+)(in) = 4 Fe(III)-[cytochrome c] + 2 H2O + 4 H(+)(out). Component of the cytochrome c oxidase, the last enzyme in the mitochondrial electron transport chain which drives oxidative phosphorylation. The respiratory chain contains 3 multisubunit complexes succinate dehydrogenase (complex II, CII), ubiquinol-cytochrome c oxidoreductase (cytochrome b-c1 complex, complex III, CIII) and cytochrome c oxidase (complex IV, CIV), that cooperate to transfer electrons derived from NADH and succinate to molecular oxygen, creating an electrochemical gradient over the inner membrane that drives transmembrane transport and the ATP synthase. Cytochrome c oxidase is the component of the respiratory chain that catalyzes the reduction of oxygen to water. Electrons originating from reduced cytochrome c in the intermembrane space (IMS) are transferred via the dinuclear copper A center (CU(A)) of subunit 2 and heme A of subunit 1 to the active site in subunit 1, a binuclear center (BNC) formed by heme A3 and copper B (CU(B)). The BNC reduces molecular oxygen to 2 water molecules using 4 electrons from cytochrome c in the IMS and 4 protons from the mitochondrial matrix. In Petromyzon marinus (Sea lamprey), this protein is Cytochrome c oxidase subunit 3 (MT-CO3).